The sequence spans 551 residues: Cytochrome P450 monooxygenase virE (551 aa).

Positions 1–25 (MPKPWVVFGLGTLVLFLWRLNKIGR) are cleaved as a signal peptide. The N-linked (GlcNAc...) asparagine glycan is linked to Asn-392. Residue Cys-439 participates in heme binding.

It belongs to the cytochrome P450 family. Heme is required as a cofactor.

The protein operates within secondary metabolite biosynthesis. In terms of biological role, cytochrome P450 monooxygenase; part of the gene cluster that mediates the biosynthesis of virensols and trichoxide, fungal natural products that contain or are derived from a salicylaldehyde core. The pathway begins with the synthesis of the reduced chain in virensol C by the highly reducing polyketide synthase virA via condensation of one acetate and 8 malonate units. VirA has interesting programming rules since the first 2 ketides are fully reduced, the 3 following ketides undergo beta-dehydration, and the last 3 ketides are only reduced to beta-hydroxys to yield the trihydroxy portion. The production of aldehyde virensol C by virA alone is surprising, since virA does not contain a reductase (R) domain that is typically associated with reductive product release in HRPKS. The cupin-domain enzyme virC is involved in enhancing virA product turnover. The short-chain dehydrogenase virB then oxidizes the C-7 alcohol of virensol C to a ketone, yielding virensol D. Virensol D is further transformed to salicylaldehyde 5-deoxyaurocitrin by the short-chain dehydrogenase virD. VirD catalyzes the dehydrogenation of C-3 to form the beta-ketone aldehyde, which is followed by the generation of the nucleophilic C-2 that is required for the intramolecular aldol condensation between C-2 and C-7, itself followed by dehydration and aromatization which leads to salicylaldehyde 5-deoxyaurocitrin. While the dehydrogenation of virensol D is definitely catalyzed by virD, the aldol condensation and dehydration may be uncatalyzed or assisted by virD. The short chain dehydrogenase virG then converts salicylaldehyde 5-deoxyaurocitrin into virensol B which is further hydroxylated by the cytochrome P450 monooxygenase virE to yield the hydroquinone virensol A. VirI then may oxidize virensol A to form the quinone, while virH performs the epoxidation. Finally, the two remaining short-chain dehydrogenases, virK and virL, are probably responsible for reducing the ketones to the corresponding alcohols to furnish the epoxycyclohexanol structure in trichoxide. This chain is Cytochrome P450 monooxygenase virE, found in Hypocrea virens (strain Gv29-8 / FGSC 10586) (Gliocladium virens).